A 191-amino-acid polypeptide reads, in one-letter code: UPF0312 protein Sbal_3041 (191 aa).

Positions 1-22 (MKKQLLSALIGASLLAPMAASA) are cleaved as a signal peptide.

It belongs to the UPF0312 family. Type 1 subfamily.

The protein localises to the periplasm. This chain is UPF0312 protein Sbal_3041, found in Shewanella baltica (strain OS155 / ATCC BAA-1091).